A 337-amino-acid polypeptide reads, in one-letter code: Ketol-acid reductoisomerase (NADP(+)) (337 aa).

The KARI N-terminal Rossmann domain maps to 3-183 (VEVFYDDDAD…GGTRAGAIRT (181 aa)). Residues 26-29 (YGSQ), serine 52, serine 54, and 84-87 (DTAQ) each bind NADP(+). Histidine 109 is a catalytic residue. Glycine 135 contacts NADP(+). Residues 184–329 (TFTEETETDL…SKLRGMMSWV (146 aa)) enclose the KARI C-terminal knotted domain. Residues aspartate 192, glutamate 196, glutamate 228, and glutamate 232 each coordinate Mg(2+). Serine 253 contacts substrate.

This sequence belongs to the ketol-acid reductoisomerase family. The cofactor is Mg(2+).

It carries out the reaction (2R)-2,3-dihydroxy-3-methylbutanoate + NADP(+) = (2S)-2-acetolactate + NADPH + H(+). The enzyme catalyses (2R,3R)-2,3-dihydroxy-3-methylpentanoate + NADP(+) = (S)-2-ethyl-2-hydroxy-3-oxobutanoate + NADPH + H(+). It functions in the pathway amino-acid biosynthesis; L-isoleucine biosynthesis; L-isoleucine from 2-oxobutanoate: step 2/4. The protein operates within amino-acid biosynthesis; L-valine biosynthesis; L-valine from pyruvate: step 2/4. In terms of biological role, involved in the biosynthesis of branched-chain amino acids (BCAA). Catalyzes an alkyl-migration followed by a ketol-acid reduction of (S)-2-acetolactate (S2AL) to yield (R)-2,3-dihydroxy-isovalerate. In the isomerase reaction, S2AL is rearranged via a Mg-dependent methyl migration to produce 3-hydroxy-3-methyl-2-ketobutyrate (HMKB). In the reductase reaction, this 2-ketoacid undergoes a metal-dependent reduction by NADPH to yield (R)-2,3-dihydroxy-isovalerate. The sequence is that of Ketol-acid reductoisomerase (NADP(+)) from Salinispora arenicola (strain CNS-205).